The sequence spans 812 residues: Leucine--tRNA ligase (812 aa).

The short motif at 40 to 51 (SYPSGSNLHAGH) is the 'HIGH' region element. The 'KMSKS' region signature appears at 572–576 (KMSKS). ATP is bound at residue lysine 575.

Belongs to the class-I aminoacyl-tRNA synthetase family.

Its subcellular location is the cytoplasm. It carries out the reaction tRNA(Leu) + L-leucine + ATP = L-leucyl-tRNA(Leu) + AMP + diphosphate. This is Leucine--tRNA ligase from Clostridium tetani (strain Massachusetts / E88).